Consider the following 349-residue polypeptide: Phloroglucinol synthase (349 aa).

The active site involves Cys138.

The protein belongs to the thiolase-like superfamily. Chalcone/stilbene synthases family.

The enzyme catalyses 3 malonyl-CoA + 3 H(+) = 1,3,5-trihydroxybenzene + 3 CO2 + 3 CoA. The protein operates within antibiotic biosynthesis. In terms of biological role, type III polyketide synthase that catalyzes the synthesis of phloroglucinol from three molecules of malonyl-CoA. In addition to its ability to produce phloroglucinol from malonyl-CoA, it exhibits broad substrate specificity, accepting C4-C12 aliphatic acyl-CoAs and phenylacetyl-CoA as the starters to form C6-polyoxoalkylated alpha-pyrones from sequential condensation with malonyl-CoA. The polypeptide is Phloroglucinol synthase (Pseudomonas fluorescens (strain ATCC BAA-477 / NRRL B-23932 / Pf-5)).